The following is a 510-amino-acid chain: Serine/threonine protein phosphatase 2A 59 kDa regulatory subunit B' eta isoform (510 aa).

The segment at 1–87 is disordered; that stretch reads MWKQILSKLP…NNNNNNNNGV (87 aa). The segment covering 10–19 has biased composition (basic residues); sequence PNKKSSKHEH. A compositionally biased stretch (low complexity) spans 27–42; sequence HSSSSSHTSGASTSKS.

It belongs to the phosphatase 2A regulatory subunit B56 family. In terms of assembly, PP2A consists of a common heteromeric enzyme, composed of a catalytic subunit (subunits C), a constant regulatory subunit (subunit A), and a variety of regulatory subunits such as subunits B (the R2/B/PR55/B55, R3/B''/PR72/PR130/PR59 and R5/B'/B56 families). Interacts with BZR1. Interacts with BRI1.

The protein localises to the nucleus. Its subcellular location is the nucleolus. The protein resides in the cytoplasm. The B regulatory subunit may modulate substrate selectivity and catalytic activity, and may also direct the localization of the catalytic enzyme to a particular subcellular compartment. The holoenzyme composed of PP2AA1, PP2A4 and B'ETA acts as negative regulator of plant innate immunity by controlling BAK1 phosphorylation state and activation in surface-localized immune receptor complexes. Required for the formation of the PP2A holoenzyme that negatively regulates brassinosteroid signaling by dephosphorylating and inactivating BRI1 in the cytoplasm. This is Serine/threonine protein phosphatase 2A 59 kDa regulatory subunit B' eta isoform (B'ETA) from Arabidopsis thaliana (Mouse-ear cress).